Consider the following 79-residue polypeptide: uncharacterized protein (79 aa).

This is an uncharacterized protein from Escherichia coli O6:H1 (strain CFT073 / ATCC 700928 / UPEC).